We begin with the raw amino-acid sequence, 219 residues long: MAFLLHQARFFTTVNHLRDLPPTVQPEVAFAGRSNAGKSTAINVLCNQKRLAFASKTPGRTQHINYFSVGPAAEPVAHLVDLPGYGYAEVPGAAKAHWEQLLSSYLQTRPQLCGMILMMDARRPLTELDRRMIEWFAPTGKPIHSLLTKCDKLTRQESINALRATQKSLDAYRDAGYAGKLTVQLFSALKRTGLDDAHALIESWVRPAAADEDRAAVAE.

Residues 24–207 (VQPEVAFAGR…HALIESWVRP (184 aa)) form the EngB-type G domain. GTP is bound by residues 32–39 (GRSNAGKS), 59–63 (GRTQH), 81–84 (DLPG), 148–151 (TKCD), and 185–188 (LFSA). Residues Ser39 and Thr61 each contribute to the Mg(2+) site.

It belongs to the TRAFAC class TrmE-Era-EngA-EngB-Septin-like GTPase superfamily. EngB GTPase family. The cofactor is Mg(2+).

Its function is as follows. Necessary for normal cell division and for the maintenance of normal septation. In Burkholderia mallei (strain ATCC 23344), this protein is Probable GTP-binding protein EngB.